The chain runs to 92 residues: Acyl carrier protein (92 aa).

Positions 1-84 (MPSTADERQL…QIAAHLAEAV (84 aa)) constitute a Carrier domain. An O-(pantetheine 4'-phosphoryl)serine modification is found at S44.

This sequence belongs to the acyl carrier protein (ACP) family. Post-translationally, 4'-phosphopantetheine is transferred from CoA to a specific serine of apo-ACP by AcpS. This modification is essential for activity because fatty acids are bound in thioester linkage to the sulfhydryl of the prosthetic group.

The protein resides in the cytoplasm. It functions in the pathway lipid metabolism; fatty acid biosynthesis. Functionally, carrier of the growing fatty acid chain in fatty acid biosynthesis. This Streptomyces coelicolor (strain ATCC BAA-471 / A3(2) / M145) protein is Acyl carrier protein.